The chain runs to 493 residues: 3-octaprenyl-4-hydroxybenzoate carboxy-lyase (493 aa).

N172 is a Mn(2+) binding site. Residues 175 to 177, 189 to 191, and 194 to 195 contribute to the prenylated FMN site; these read IYR, RWL, and RG. Position 238 (E238) interacts with Mn(2+). D287 serves as the catalytic Proton donor.

This sequence belongs to the UbiD family. As to quaternary structure, homohexamer. The cofactor is prenylated FMN. Requires Mn(2+) as cofactor.

The protein localises to the cell membrane. It carries out the reaction a 4-hydroxy-3-(all-trans-polyprenyl)benzoate + H(+) = a 2-(all-trans-polyprenyl)phenol + CO2. The protein operates within cofactor biosynthesis; ubiquinone biosynthesis. Its function is as follows. Catalyzes the decarboxylation of 3-octaprenyl-4-hydroxy benzoate to 2-octaprenylphenol, an intermediate step in ubiquinone biosynthesis. The chain is 3-octaprenyl-4-hydroxybenzoate carboxy-lyase from Shewanella putrefaciens (strain CN-32 / ATCC BAA-453).